Here is a 438-residue protein sequence, read N- to C-terminus: 3-phosphoshikimate 1-carboxyvinyltransferase (438 aa).

3-phosphoshikimate is bound by residues Lys-25, Ser-26, and Arg-30. Position 25 (Lys-25) interacts with phosphoenolpyruvate. The phosphoenolpyruvate site is built by Gly-99 and Arg-128. 4 residues coordinate 3-phosphoshikimate: Ser-173, Gln-175, Asp-325, and Lys-352. Gln-175 contacts phosphoenolpyruvate. The active-site Proton acceptor is Asp-325. The phosphoenolpyruvate site is built by Arg-356 and Arg-398.

This sequence belongs to the EPSP synthase family. Monomer.

Its subcellular location is the cytoplasm. The catalysed reaction is 3-phosphoshikimate + phosphoenolpyruvate = 5-O-(1-carboxyvinyl)-3-phosphoshikimate + phosphate. It functions in the pathway metabolic intermediate biosynthesis; chorismate biosynthesis; chorismate from D-erythrose 4-phosphate and phosphoenolpyruvate: step 6/7. Catalyzes the transfer of the enolpyruvyl moiety of phosphoenolpyruvate (PEP) to the 5-hydroxyl of shikimate-3-phosphate (S3P) to produce enolpyruvyl shikimate-3-phosphate and inorganic phosphate. The polypeptide is 3-phosphoshikimate 1-carboxyvinyltransferase (Prochlorococcus marinus subsp. pastoris (strain CCMP1986 / NIES-2087 / MED4)).